The sequence spans 513 residues: Serine/threonine protein phosphatase 2A 55 kDa regulatory subunit B alpha isoform (513 aa).

At M1 the chain carries N-acetylmethionine. WD repeat units lie at residues 36–75 (QEVDIISAIEFDNSGNHLATGDRGGRVVLFERTDTNNSSG), 112–153 (EIEE…IKKI), 232–270 (AHDYHINSISNNSDGETFISADDLRINLWNLEISNQSFN), 281–321 (DLSE…LCDS), 340–378 (EIIASVSDIKFAKEGRYLLSRDYMTLKLWDINMDAGPVA), and 483–513 (DYTTKLLHLAWHPNENSIACAAANSLYMYYA).

It belongs to the phosphatase 2A regulatory subunit B family. In terms of assembly, PP2A consists of a common heteromeric enzyme, composed of a catalytic subunit (subunits C), a constant regulatory subunit (subunit A), and a variety of regulatory subunits such as subunits B (the R2/B/PR55/B55, R3/B''/PR72/PR130/PR59 and R5/B'/B56 families). Interacts with SIC/RON3. As to expression, expressed ubiquitously.

Its function is as follows. The B regulatory subunit may modulate substrate selectivity and catalytic activity, and may also direct the localization of the catalytic enzyme to a particular subcellular compartment. The chain is Serine/threonine protein phosphatase 2A 55 kDa regulatory subunit B alpha isoform (PP2AB1) from Arabidopsis thaliana (Mouse-ear cress).